Consider the following 296-residue polypeptide: Lipoyl synthase (296 aa).

[4Fe-4S] cluster contacts are provided by Cys-37, Cys-42, Cys-48, Cys-63, Cys-67, Cys-70, and Ser-276. A Radical SAM core domain is found at 49 to 265; that stretch reads WSKKHTTVMI…ERVAKTKGFL (217 aa).

The protein belongs to the radical SAM superfamily. Lipoyl synthase family. It depends on [4Fe-4S] cluster as a cofactor.

The protein localises to the cytoplasm. The enzyme catalyses [[Fe-S] cluster scaffold protein carrying a second [4Fe-4S](2+) cluster] + N(6)-octanoyl-L-lysyl-[protein] + 2 oxidized [2Fe-2S]-[ferredoxin] + 2 S-adenosyl-L-methionine + 4 H(+) = [[Fe-S] cluster scaffold protein] + N(6)-[(R)-dihydrolipoyl]-L-lysyl-[protein] + 4 Fe(3+) + 2 hydrogen sulfide + 2 5'-deoxyadenosine + 2 L-methionine + 2 reduced [2Fe-2S]-[ferredoxin]. It functions in the pathway protein modification; protein lipoylation via endogenous pathway; protein N(6)-(lipoyl)lysine from octanoyl-[acyl-carrier-protein]: step 2/2. Catalyzes the radical-mediated insertion of two sulfur atoms into the C-6 and C-8 positions of the octanoyl moiety bound to the lipoyl domains of lipoate-dependent enzymes, thereby converting the octanoylated domains into lipoylated derivatives. The chain is Lipoyl synthase from Rickettsia massiliae (strain Mtu5).